The chain runs to 193 residues: Ion-translocating oxidoreductase complex subunit A (193 aa).

The next 6 helical transmembrane spans lie at 5-25 (FLLFVGTVLVNNFVLVKFLGL), 39-59 (IGMGFATTFVMTLASVCSWLV), 62-82 (FILLPLDLIYLRTLSFILVIA), 102-122 (LLGIFLPLITTNCAVLGVALL), 134-154 (AIYGFGAAAGFSLVMVLFAAI), and 171-191 (SIGLITAGLMSLAFMGFSGLV).

This sequence belongs to the NqrDE/RnfAE family. In terms of assembly, the complex is composed of six subunits: RnfA, RnfB, RnfC, RnfD, RnfE and RnfG.

It localises to the cell inner membrane. Functionally, part of a membrane-bound complex that couples electron transfer with translocation of ions across the membrane. The polypeptide is Ion-translocating oxidoreductase complex subunit A (Photorhabdus laumondii subsp. laumondii (strain DSM 15139 / CIP 105565 / TT01) (Photorhabdus luminescens subsp. laumondii)).